The sequence spans 100 residues: Small ribosomal subunit protein uS14c (100 aa).

This sequence belongs to the universal ribosomal protein uS14 family. In terms of assembly, part of the 30S ribosomal subunit.

It localises to the plastid. The protein resides in the chloroplast. Its function is as follows. Binds 16S rRNA, required for the assembly of 30S particles. This chain is Small ribosomal subunit protein uS14c, found in Eucalyptus globulus subsp. globulus (Tasmanian blue gum).